The chain runs to 377 residues: DNA replication and repair protein RecF (377 aa).

30–37 (GNNGSGKS) serves as a coordination point for ATP.

The protein belongs to the RecF family.

The protein resides in the cytoplasm. The RecF protein is involved in DNA metabolism; it is required for DNA replication and normal SOS inducibility. RecF binds preferentially to single-stranded, linear DNA. It also seems to bind ATP. The sequence is that of DNA replication and repair protein RecF from Colwellia psychrerythraea (strain 34H / ATCC BAA-681) (Vibrio psychroerythus).